The following is a 341-amino-acid chain: UDP-glucose 4-epimerase (341 aa).

This sequence belongs to the polysaccharide synthase family.

The catalysed reaction is UDP-alpha-D-glucose = UDP-alpha-D-galactose. Functionally, epimerizes UDP-galactose to UDP-glucose. This chain is UDP-glucose 4-epimerase (capD), found in Rickettsia typhi (strain ATCC VR-144 / Wilmington).